Consider the following 295-residue polypeptide: Ventral anterior homeobox 1a (295 aa).

Residues 20–33 are compositionally biased toward basic and acidic residues; it reads ISKPKDNKEIRETQ. Residues 20-63 are disordered; that stretch reads ISKPKDNKEIRETQAKMPSTYLKEQPGTYPAPGSSELCAKNKSS. The homeobox DNA-binding region spans 97 to 156; the sequence is PKRSRTSFTAEQLYRLEMEFQRCQYVVGRERTDLSRQLNLSETQVKVWFQNRRTKQKKDQ. Residues 203–226 are disordered; the sequence is RAPNSSGPGTRSLATVTSTPPHQP. Residues 204–222 show a composition bias toward polar residues; that stretch reads APNSSGPGTRSLATVTSTP.

Belongs to the EMX homeobox family.

It localises to the nucleus. In terms of biological role, may play a role in the specification and maintenance of basal forebrain identity. The protein is Ventral anterior homeobox 1a (vax1-a) of Xenopus laevis (African clawed frog).